The chain runs to 213 residues: Flagellin A1 (213 aa).

Positions 1-10 are excised as a propeptide; that stretch reads MFENINEDRG. N-linked (GlcNAc...) asparagine glycans are attached at residues Asn70, Asn115, and Asn172.

The protein belongs to the archaeal flagellin family. In terms of processing, glycosylated by a pentasaccharide similar to the S-layer glycoprotein, probably comprising a hexose, 2 hexuronic acids, a methyl ester of a hexuronic acid and mannose. Glycosylation is required for biosynthesis of stable flagella.

The protein resides in the archaeal flagellum. Its function is as follows. Major flagellin required for motility. Not involved in PibD-dependent surface adhesion. Much more abundant in cells compared to FlgA2. In Haloferax volcanii (strain ATCC 29605 / DSM 3757 / JCM 8879 / NBRC 14742 / NCIMB 2012 / VKM B-1768 / DS2) (Halobacterium volcanii), this protein is Flagellin A1 (flgA1).